A 202-amino-acid chain; its full sequence is Dephospho-CoA kinase (202 aa).

Residues valine 5–valine 202 enclose the DPCK domain. Glycine 13 to threonine 18 contacts ATP.

The protein belongs to the CoaE family.

It localises to the cytoplasm. The catalysed reaction is 3'-dephospho-CoA + ATP = ADP + CoA + H(+). It functions in the pathway cofactor biosynthesis; coenzyme A biosynthesis; CoA from (R)-pantothenate: step 5/5. Functionally, catalyzes the phosphorylation of the 3'-hydroxyl group of dephosphocoenzyme A to form coenzyme A. This is Dephospho-CoA kinase from Colwellia psychrerythraea (strain 34H / ATCC BAA-681) (Vibrio psychroerythus).